The sequence spans 359 residues: Methylthioribose-1-phosphate isomerase (359 aa).

Asp-235 serves as the catalytic Proton donor.

This sequence belongs to the eIF-2B alpha/beta/delta subunits family. MtnA subfamily.

It is found in the cytoplasm. The protein localises to the nucleus. It carries out the reaction 5-(methylsulfanyl)-alpha-D-ribose 1-phosphate = 5-(methylsulfanyl)-D-ribulose 1-phosphate. It participates in amino-acid biosynthesis; L-methionine biosynthesis via salvage pathway; L-methionine from S-methyl-5-thio-alpha-D-ribose 1-phosphate: step 1/6. Catalyzes the interconversion of methylthioribose-1-phosphate (MTR-1-P) into methylthioribulose-1-phosphate (MTRu-1-P). In Schizosaccharomyces pombe (strain 972 / ATCC 24843) (Fission yeast), this protein is Methylthioribose-1-phosphate isomerase (mri1).